An 88-amino-acid chain; its full sequence is Small ribosomal subunit protein uS17c (88 aa).

The protein belongs to the universal ribosomal protein uS17 family. In terms of assembly, part of the 30S ribosomal subunit.

It is found in the plastid. The protein resides in the cyanelle. One of the primary rRNA binding proteins, it binds specifically to the 5'-end of 16S ribosomal RNA. The protein is Small ribosomal subunit protein uS17c (rps17) of Cyanophora paradoxa.